A 283-amino-acid chain; its full sequence is Putative replication protein XF_b0001 (283 aa).

The protein is Putative replication protein XF_b0001 of Xylella fastidiosa (strain 9a5c).